A 126-amino-acid chain; its full sequence is Large ribosomal subunit protein bL20 (126 aa).

The protein belongs to the bacterial ribosomal protein bL20 family.

Functionally, binds directly to 23S ribosomal RNA and is necessary for the in vitro assembly process of the 50S ribosomal subunit. It is not involved in the protein synthesizing functions of that subunit. The protein is Large ribosomal subunit protein bL20 of Frankia casuarinae (strain DSM 45818 / CECT 9043 / HFP020203 / CcI3).